Consider the following 657-residue polypeptide: UvrABC system protein B (657 aa).

Residues 25–182 (NSIKSNNRAQ…KKLIEIQYER (158 aa)) enclose the Helicase ATP-binding domain. 38–45 (GVTGSGKT) is an ATP binding site. Residues 91 to 114 (YYDYYQPEAYVPQTDTFIEKDASI) carry the Beta-hairpin motif. The Helicase C-terminal domain occupies 429–595 (QIDDLYGEIN…TIIKDVRDII (167 aa)). The UVR domain occupies 621 to 656 (DKLIKDLTEEMLLAAKNLQFERAAELRDIINEIKDG).

It belongs to the UvrB family. As to quaternary structure, forms a heterotetramer with UvrA during the search for lesions. Interacts with UvrC in an incision complex.

Its subcellular location is the cytoplasm. In terms of biological role, the UvrABC repair system catalyzes the recognition and processing of DNA lesions. A damage recognition complex composed of 2 UvrA and 2 UvrB subunits scans DNA for abnormalities. Upon binding of the UvrA(2)B(2) complex to a putative damaged site, the DNA wraps around one UvrB monomer. DNA wrap is dependent on ATP binding by UvrB and probably causes local melting of the DNA helix, facilitating insertion of UvrB beta-hairpin between the DNA strands. Then UvrB probes one DNA strand for the presence of a lesion. If a lesion is found the UvrA subunits dissociate and the UvrB-DNA preincision complex is formed. This complex is subsequently bound by UvrC and the second UvrB is released. If no lesion is found, the DNA wraps around the other UvrB subunit that will check the other stand for damage. This is UvrABC system protein B from Clostridium beijerinckii (strain ATCC 51743 / NCIMB 8052) (Clostridium acetobutylicum).